A 91-amino-acid polypeptide reads, in one-letter code: Uteroglobin (91 aa).

Residues 1–21 form the signal peptide; it reads MKLTIAIVLVTLTLFCRPAST.

This sequence belongs to the secretoglobin family. In terms of assembly, antiparallel homodimer; disulfide-linked. Interaction with LMBR1L is controversial.

It localises to the secreted. Binds phosphatidylcholine, phosphatidylinositol, polychlorinated biphenyls (PCB) and weakly progesterone, potent inhibitor of phospholipase A2. This chain is Uteroglobin (SCGB1A1), found in Bos taurus (Bovine).